Reading from the N-terminus, the 382-residue chain is D-alanine--D-alanine ligase (382 aa).

One can recognise an ATP-grasp domain in the interval 161–372 (KVVFEAAGLQ…YAELIDELIY (212 aa)). 193–248 (VDRLGYPVFVKPARAGSSMGISKVDSLEGLDAAIAAAREHDLKLVIEAGIVGREIE) contributes to the ATP binding site. Residues Asp-326, Glu-339, and Asn-341 each coordinate Mg(2+).

This sequence belongs to the D-alanine--D-alanine ligase family. Mg(2+) is required as a cofactor. Requires Mn(2+) as cofactor.

The protein resides in the cytoplasm. It carries out the reaction 2 D-alanine + ATP = D-alanyl-D-alanine + ADP + phosphate + H(+). It participates in cell wall biogenesis; peptidoglycan biosynthesis. In terms of biological role, cell wall formation. The protein is D-alanine--D-alanine ligase of Arthrobacter sp. (strain FB24).